Here is a 264-residue protein sequence, read N- to C-terminus: Transmembrane protein 41A (264 aa).

The signal sequence occupies residues 1–17 (MHSLLGLLLVFAGSTFA). 5 helical membrane-spanning segments follow: residues 67-87 (VYVF…AIPG), 90-110 (FLNV…LCCV), 153-173 (LFFF…FLNL), 175-195 (APIL…GLIP), and 219-239 (WETA…GTLI). The VTT domain stretch occupies residues 96 to 207 (GALFGPWLGL…FICVQTGSIL (112 aa)).

It belongs to the TMEM41 family.

It is found in the membrane. This chain is Transmembrane protein 41A (TMEM41A), found in Bos taurus (Bovine).